The chain runs to 2070 residues: HEAT repeat-containing protein 5B (2070 aa).

3 HEAT repeats span residues 848–885 (EVRKSALTLVMGALDNPNPILRCAAGEALGRMAQVVGE), 1062–1099 (VNLSSLVPSLCVHLCSSHLLLRRAAVACLRQLAQREAA), and 1290–1327 (LHLSDLIRMAFMAATDHSNQLRMAGLQALEDIIKKFAS). The residue at position 1737 (Ser-1737) is a Phosphoserine.

Belongs to the HEATR5 family. In terms of assembly, self-associates. Component of the aftiphilin/p200/gamma-synergin complex, at least composed of AFTPH/aftiphilin, HEATR5B/p200a and SYNRG/gamma-synergin, which plays a role in the AP1G1/AP-1-mediated protein trafficking from early to recycling endosomes and between the trans-Golgi network (TGN) and endosomes. Within the complex interacts with AFTPH/aftiphilin and SYNRG/gamma-synergin; the interactions are direct. Interacts with GGA1.

Its subcellular location is the cytoplasm. The protein localises to the perinuclear region. It localises to the cytoplasmic vesicle. The protein resides in the clathrin-coated vesicle. In terms of biological role, component of clathrin-coated vesicles. Component of the aftiphilin/p200/gamma-synergin complex, which plays roles in AP1G1/AP-1-mediated protein trafficking including the trafficking of transferrin from early to recycling endosomes, and the membrane trafficking of furin and the lysosomal enzyme cathepsin D between the trans-Golgi network (TGN) and endosomes. The chain is HEAT repeat-containing protein 5B (Heatr5b) from Mus musculus (Mouse).